We begin with the raw amino-acid sequence, 597 residues long: Elongation factor 4 (597 aa).

Positions 2-184 (KHIRNFSIIA…NIVTAIPPPE (183 aa)) constitute a tr-type G domain. Residues 14-19 (DHGKST) and 131-134 (NKID) each bind GTP.

This sequence belongs to the TRAFAC class translation factor GTPase superfamily. Classic translation factor GTPase family. LepA subfamily.

It is found in the cell inner membrane. The enzyme catalyses GTP + H2O = GDP + phosphate + H(+). Its function is as follows. Required for accurate and efficient protein synthesis under certain stress conditions. May act as a fidelity factor of the translation reaction, by catalyzing a one-codon backward translocation of tRNAs on improperly translocated ribosomes. Back-translocation proceeds from a post-translocation (POST) complex to a pre-translocation (PRE) complex, thus giving elongation factor G a second chance to translocate the tRNAs correctly. Binds to ribosomes in a GTP-dependent manner. This Vibrio atlanticus (strain LGP32) (Vibrio splendidus (strain Mel32)) protein is Elongation factor 4.